Here is an 833-residue protein sequence, read N- to C-terminus: Copper-exporting P-type ATPase (833 aa).

HMA domains lie at 3–64 (QTID…YGAT) and 98–161 (ESQQ…YGAE). Cu(+) contacts are provided by Cys-14, Cys-17, Cys-109, and Cys-112. Helical transmembrane passes span 186-206 (WQAIVALAVGIPVMVWGMIGD), 217-237 (LWLAIGLITLAVMVFAGGHFY), 253-273 (TLVALGTGVAWLYSMSVNLWP), 283-303 (LYYEASAMIIGLINLGHMLEA), 437-457 (AVFVPVVVAIALFSAAIWYFF), and 463-483 (IVYTLVIATTVLIIACPCALG). Asp-522 (4-aspartylphosphate intermediate) is an active-site residue. Mg(2+) contacts are provided by Asp-719 and Asp-723. Helical transmembrane passes span 778–798 (LGAFIYNSIGIPVAAGILWPF) and 800–820 (GTLLNPVVAGAAMALSSITVV).

The protein belongs to the cation transport ATPase (P-type) (TC 3.A.3) family. Type IB subfamily.

The protein localises to the cell inner membrane. The protein resides in the cytoplasm. It catalyses the reaction Cu(+)(in) + ATP + H2O = Cu(+)(out) + ADP + phosphate + H(+). Involved in Cu(+) export. Essential for copper tolerance under both aerobic and anaerobic conditions. Functionally, probably also encodes a cytoplasmic copper chaperone CopA(Z) that is produced by programmed ribosomal frameshifting. The protein is Copper-exporting P-type ATPase (copA) of Salmonella typhimurium (strain LT2 / SGSC1412 / ATCC 700720).